The sequence spans 153 residues: Superoxide dismutase [Cu-Zn] (153 aa).

Cu cation contacts are provided by His46, His48, and His63. A disulfide bridge connects residues Cys57 and Cys146. Residues His63, His71, His80, and Asp83 each contribute to the Zn(2+) site. Position 120 (His120) interacts with Cu cation.

Belongs to the Cu-Zn superoxide dismutase family. As to quaternary structure, homodimer. The cofactor is Cu cation. Zn(2+) is required as a cofactor.

It is found in the cytoplasm. The catalysed reaction is 2 superoxide + 2 H(+) = H2O2 + O2. In terms of biological role, destroys radicals which are normally produced within the cells and which are toxic to biological systems. In Solidago canadensis var. scabra (Tall goldenrod), this protein is Superoxide dismutase [Cu-Zn] (SODCC).